The chain runs to 379 residues: UDP-4-amino-4-deoxy-L-arabinose--oxoglutarate aminotransferase (379 aa).

Lys-182 is modified (N6-(pyridoxal phosphate)lysine).

The protein belongs to the DegT/DnrJ/EryC1 family. ArnB subfamily. In terms of assembly, homodimer. Pyridoxal 5'-phosphate is required as a cofactor.

It catalyses the reaction UDP-4-amino-4-deoxy-beta-L-arabinose + 2-oxoglutarate = UDP-beta-L-threo-pentopyranos-4-ulose + L-glutamate. It participates in nucleotide-sugar biosynthesis; UDP-4-deoxy-4-formamido-beta-L-arabinose biosynthesis; UDP-4-deoxy-4-formamido-beta-L-arabinose from UDP-alpha-D-glucuronate: step 2/3. It functions in the pathway bacterial outer membrane biogenesis; lipopolysaccharide biosynthesis. Catalyzes the conversion of UDP-4-keto-arabinose (UDP-Ara4O) to UDP-4-amino-4-deoxy-L-arabinose (UDP-L-Ara4N). The modified arabinose is attached to lipid A and is required for resistance to polymyxin and cationic antimicrobial peptides. The sequence is that of UDP-4-amino-4-deoxy-L-arabinose--oxoglutarate aminotransferase from Escherichia coli O7:K1 (strain IAI39 / ExPEC).